Consider the following 464-residue polypeptide: Argininosuccinate lyase (464 aa).

It belongs to the lyase 1 family. Argininosuccinate lyase subfamily.

The protein localises to the cytoplasm. It catalyses the reaction 2-(N(omega)-L-arginino)succinate = fumarate + L-arginine. Its pathway is amino-acid biosynthesis; L-arginine biosynthesis; L-arginine from L-ornithine and carbamoyl phosphate: step 3/3. The chain is Argininosuccinate lyase from Pseudomonas fluorescens (strain SBW25).